Consider the following 125-residue polypeptide: Glycine cleavage system H protein 1 (125 aa).

One can recognise a Lipoyl-binding domain in the interval 22–103; that stretch reads KAYIGITDYA…PYGSWLVAVR (82 aa). Lys-63 is subject to N6-lipoyllysine.

Belongs to the GcvH family. The glycine cleavage system is composed of four proteins: P, T, L and H. It depends on (R)-lipoate as a cofactor.

In terms of biological role, the glycine cleavage system catalyzes the degradation of glycine. The H protein shuttles the methylamine group of glycine from the P protein to the T protein. This chain is Glycine cleavage system H protein 1, found in Caldanaerobacter subterraneus subsp. tengcongensis (strain DSM 15242 / JCM 11007 / NBRC 100824 / MB4) (Thermoanaerobacter tengcongensis).